The following is a 432-amino-acid chain: MYKLDNNDIDDETNNSVSLTSLLEFLDPIASKVVSKYYHGSHLSKAEQKLRNFEGFRRRKPHHEHDSHHPHHLNRSRSFLQLEDFKVRALQRIRNLDKPLDSIFFKNSSRLEKAFYPFTLFNIFFIGFLMGRFPEWFHVYYTILFFVLMPIRFYTYYKTKNHYFLADFCYFVNMLCLLFIWIFPYSYSLFQSCFAFTFGTLCFAVITWRNSLVIHSIDKTTSCFIHIIPPCVMYVIYHGLPLEYKIERFPGAIIQSELDIKKNILWTSLYYLVWQSLYHYFITLKKSSKIKSGERMTSFEYLTTHQFKNFWAVKLRSPWPMIIYTLSQYFYQLFTMLLCGIWIRYKLAAALFLTIVFLWASHNGATYYIDHYGKNFEKEVDRLRLEVENLQQKLQPDSDAVISDASVNDKDYLNVNRDEDFDDSSSVSSKSD.

At Met1–Arg110 the chain is on the cytoplasmic side. Ser78 carries the post-translational modification Phosphoserine. The chain crosses the membrane as a helical span at residues Leu111 to Gly131. Arg132 is a topological domain (lumenal). The chain crosses the membrane as a helical span at residues Phe133 to Phe153. Topologically, residues Tyr154–His162 are cytoplasmic. Residues Tyr163 to Phe183 traverse the membrane as a helical segment. Residues Pro184–Tyr187 are Lumenal-facing. Residues Ser188–Trp208 traverse the membrane as a helical segment. Residues Arg209–Thr221 are Cytoplasmic-facing. Residues Ser222–Leu242 traverse the membrane as a helical segment. Over Glu243–Asn263 the chain is Lumenal. A helical transmembrane segment spans residues Ile264–Leu284. Over Lys285–Pro318 the chain is Cytoplasmic. Residues Trp319 to Cys339 form a helical membrane-spanning segment. Residues Gly340–Lys346 are Lumenal-facing. A helical transmembrane segment spans residues Leu347–Ile369. At Asp370–Asp432 the chain is on the cytoplasmic side. Positions Leu413 to Asp432 are disordered.

The protein belongs to the GPC1 family.

It localises to the membrane. The enzyme catalyses sn-glycerol 3-phosphocholine + an acyl-CoA = a 1-acyl-sn-glycero-3-phosphocholine + CoA. It carries out the reaction sn-glycero-3-phosphoethanolamine + an acyl-CoA = a monoacyl-sn-glycero-3-phosphoethanolamine + CoA. It catalyses the reaction sn-glycero-3-phosphoethanolamine + (9Z)-octadecenoyl-CoA = (9Z-octadecenoyl)-sn-glycero-3-phosphoethanolamine + CoA. The catalysed reaction is sn-glycerol 3-phosphocholine + hexadecanoyl-CoA = hexadecanoyl-sn-glycero-3-phosphocholine + CoA. The enzyme catalyses (9Z,12Z)-octadecadienoyl-CoA + sn-glycerol 3-phosphocholine = (9Z,12Z-octadecadienoyl)-sn-glycero-3-phosphocholine + CoA. It carries out the reaction (12R)-hydroxy-(9Z)-octadecenoyl-CoA + sn-glycerol 3-phosphocholine = (12R-hydroxy-9Z-octadecenoyl)-sn-glycero-3-phosphocholine + CoA. It catalyses the reaction (9Z,12Z,15Z)-octadecatrienoyl-CoA + sn-glycerol 3-phosphocholine = (9Z,12Z,15Z-octadecatrienoyl)-sn-glycero-3-phosphocholine + CoA. The catalysed reaction is sn-glycerol 3-phosphocholine + (9Z)-octadecenoyl-CoA = (9Z-octadecenoyl)-sn-glycero-3-phosphocholine + CoA. The enzyme catalyses 1-(9Z-octadecenoyl)-sn-glycero-3-phosphoethanolamine + sn-glycerol 3-phosphocholine = (9Z-octadecenoyl)-sn-glycero-3-phosphocholine + sn-glycero-3-phosphoethanolamine. Its activity is regulated as follows. The GPCAT activity is sensitive to N-ethylmaleimide, phenanthroline, and divalent cations including Ca(2+), Mg(2+), Mn(2+) and Zn(2+). The activity is also inhibited by glycerol-3-phosphate (G3P). Its function is as follows. Glycerophosphocholine acyltransferase (GPCAT) that utilizes acyl-CoA to acylate glycero-3-phosphocholine (GPC), forming lysophosphatidylcholine (LPC). Shows broad acyl specificities with a preference for 16:0-CoA, polyunsaturated acyl-CoA, and the hydroxylated ricinoleoyl-CoA. Also catalyzes the acylation of glycero-3-phosphoethanolamine (GPE) with acyl-CoA. In addition to acyl-CoA, GPCAT efficiently utilizes LPC and lysophosphatidylethanolamine (LPE) as acyl donors in the acylation of GPC. Contributes to the maintenance of phosphatidylcholine (PC) homeostasis and might also have specific functions in acyl editing of PC, such as transferring acyl groups modified at the sn-2 position of PC to the sn-1. Involved in postsynthetic PC remodeling that produces more saturated PC species. This chain is Glycerophosphocholine acyltransferase 1, found in Saccharomyces cerevisiae (strain ATCC 204508 / S288c) (Baker's yeast).